The chain runs to 125 residues: Oxytocin-neurophysin 1 (125 aa).

The N-terminal stretch at 1–19 is a signal peptide; that stretch reads MAGSSLACCLLGLLALTSA. C20 and C25 form a disulfide bridge. Residue G28 is modified to Glycine amide. Cystine bridges form between C41–C85, C44–C58, C52–C75, C59–C65, C92–C104, C98–C116, and C105–C110.

It belongs to the vasopressin/oxytocin family. As to quaternary structure, interacts with oxytocin receptor (Ki=1.5 nM). Interacts with vasopressin V1aR/AVPR1A (Ki=37 nM), V1bR/AVPR1B (Ki=222 nM), and V2R/AVPR2 receptors (Ki=823 nM).

Neurophysin 1 specifically binds oxytocin. Functionally, oxytocin causes contraction of the smooth muscle of the uterus and of the mammary gland. Acts by binding to oxytocin receptor (OXTR). In Ovis aries (Sheep), this protein is Oxytocin-neurophysin 1 (OXT).